We begin with the raw amino-acid sequence, 576 residues long: 4-alpha-glucanotransferase DPE1, chloroplastic/amyloplastic (576 aa).

The transit peptide at 1 to 45 (MSILLRPSSSPSLCSSLKLFRLSSPDSLIDAAVLRNRTKPSQSFR) directs the protein to the chloroplast.

The protein belongs to the disproportionating enzyme family.

It localises to the plastid. Its subcellular location is the chloroplast. The protein localises to the amyloplast. The enzyme catalyses Transfers a segment of a (1-&gt;4)-alpha-D-glucan to a new position in an acceptor, which may be glucose or a (1-&gt;4)-alpha-D-glucan.. Its function is as follows. Chloroplastic alpha-glucanotransferase involved in maltotriose metabolism. Probably uses maltotriose as substrate to transfer a maltosyl unit from one molecule to another, resulting in glucose and maltopentaose. The latter can then be further metabolized to maltose and maltotriose by beta-amylase. Required for normal starch degradation in leaves. The polypeptide is 4-alpha-glucanotransferase DPE1, chloroplastic/amyloplastic (DPE1) (Arabidopsis thaliana (Mouse-ear cress)).